Here is a 101-residue protein sequence, read N- to C-terminus: Small ribosomal subunit protein uS14 (101 aa).

The protein belongs to the universal ribosomal protein uS14 family. Part of the 30S ribosomal subunit. Contacts proteins S3 and S10.

Functionally, binds 16S rRNA, required for the assembly of 30S particles and may also be responsible for determining the conformation of the 16S rRNA at the A site. The sequence is that of Small ribosomal subunit protein uS14 from Ralstonia pickettii (strain 12J).